Here is a 642-residue protein sequence, read N- to C-terminus: Threonine--tRNA ligase (642 aa).

Residues 1–61 form the TGS domain; it reads MPVITLPDGS…ENDAQLSIIT (61 aa). Positions 243-534 are catalytic; it reads DHRKIGKQLD…LTEEFAGFFP (292 aa). Residue Lys286 is modified to N6-acetyllysine. Zn(2+) contacts are provided by Cys334, His385, and His511.

This sequence belongs to the class-II aminoacyl-tRNA synthetase family. Homodimer. Zn(2+) serves as cofactor.

The protein localises to the cytoplasm. It carries out the reaction tRNA(Thr) + L-threonine + ATP = L-threonyl-tRNA(Thr) + AMP + diphosphate + H(+). In terms of biological role, catalyzes the attachment of threonine to tRNA(Thr) in a two-step reaction: L-threonine is first activated by ATP to form Thr-AMP and then transferred to the acceptor end of tRNA(Thr). Also edits incorrectly charged L-seryl-tRNA(Thr). The chain is Threonine--tRNA ligase from Escherichia coli O9:H4 (strain HS).